The primary structure comprises 776 residues: DNA ligase (776 aa).

Residues 31 to 35, 80 to 81, and E112 contribute to the NAD(+) site; these read DAEYD and SL. The N6-AMP-lysine intermediate role is filled by K114. NAD(+)-binding residues include R135, E172, K288, and K312. The Zn(2+) site is built by C406, C409, C436, and C442. Positions 693 to 776 constitute a BRCT domain; sequence AEGLPLAGQT…VFLDEQGIAI (84 aa).

Belongs to the NAD-dependent DNA ligase family. LigA subfamily. It depends on Mg(2+) as a cofactor. The cofactor is Mn(2+).

It carries out the reaction NAD(+) + (deoxyribonucleotide)n-3'-hydroxyl + 5'-phospho-(deoxyribonucleotide)m = (deoxyribonucleotide)n+m + AMP + beta-nicotinamide D-nucleotide.. Functionally, DNA ligase that catalyzes the formation of phosphodiester linkages between 5'-phosphoryl and 3'-hydroxyl groups in double-stranded DNA using NAD as a coenzyme and as the energy source for the reaction. It is essential for DNA replication and repair of damaged DNA. This is DNA ligase from Pseudomonas putida (strain W619).